The following is a 605-amino-acid chain: Pyruvate decarboxylase 2 (605 aa).

The substrate site is built by Asp68 and His155. The interval 433 to 515 (DSWFNCQKLK…FLINNGGYTI (83 aa)) is thiamine pyrophosphate binding. Mg(2+) contacts are provided by Asp483, Asn510, and Gly512. Glu516 is a substrate binding site.

The protein belongs to the TPP enzyme family. Homotetramer. It depends on a metal cation as a cofactor. The cofactor is thiamine diphosphate.

It carries out the reaction a 2-oxocarboxylate + H(+) = an aldehyde + CO2. The polypeptide is Pyruvate decarboxylase 2 (PDC2) (Oryza sativa subsp. japonica (Rice)).